The chain runs to 295 residues: 4-hydroxy-tetrahydrodipicolinate synthase (295 aa).

Residue threonine 47 participates in pyruvate binding. The Proton donor/acceptor role is filled by tyrosine 135. Catalysis depends on lysine 163, which acts as the Schiff-base intermediate with substrate. Pyruvate is bound at residue isoleucine 206.

This sequence belongs to the DapA family. Homodimer.

It is found in the cytoplasm. It catalyses the reaction L-aspartate 4-semialdehyde + pyruvate = (2S,4S)-4-hydroxy-2,3,4,5-tetrahydrodipicolinate + H2O + H(+). It functions in the pathway amino-acid biosynthesis; L-lysine biosynthesis via DAP pathway; (S)-tetrahydrodipicolinate from L-aspartate: step 3/4. In terms of biological role, catalyzes the condensation of (S)-aspartate-beta-semialdehyde [(S)-ASA] and pyruvate to 4-hydroxy-tetrahydrodipicolinate (HTPA). The polypeptide is 4-hydroxy-tetrahydrodipicolinate synthase (Staphylococcus aureus (strain Mu50 / ATCC 700699)).